The following is a 312-amino-acid chain: Malate dehydrogenase (312 aa).

NAD(+) is bound by residues 7-13 and aspartate 34; that span reads GAAGGIG. Substrate-binding residues include arginine 81 and arginine 87. NAD(+)-binding positions include asparagine 94 and 117-119; that span reads ITN. Substrate-binding residues include asparagine 119 and arginine 153. Histidine 177 acts as the Proton acceptor in catalysis. Methionine 227 contacts NAD(+).

The protein belongs to the LDH/MDH superfamily. MDH type 1 family. As to quaternary structure, homodimer.

It catalyses the reaction (S)-malate + NAD(+) = oxaloacetate + NADH + H(+). Functionally, catalyzes the reversible oxidation of malate to oxaloacetate. This Escherichia coli O17:K52:H18 (strain UMN026 / ExPEC) protein is Malate dehydrogenase.